Here is a 57-residue protein sequence, read N- to C-terminus: Phylloseptin-Az4 (57 aa).

A signal peptide spans 1 to 13 (LVLFLGLVSLSIC). The propeptide occupies 14-35 (EEEKRETEEEENDQEEDDKSEE). Residues 16 to 35 (EKRETEEEENDQEEDDKSEE) are disordered. Residues 21–32 (EEEENDQEEDDK) show a composition bias toward acidic residues. Residue L56 is modified to Leucine amide.

Expressed by the skin glands.

It localises to the secreted. Has antibacterial activity against the Gram-positive bacterium M.luteus ATCC 49732 (MIC=1.3 uM). Does not inhibit the growth of the fungus C.albicans. The protein is Phylloseptin-Az4 (psn12) of Pithecopus azureus (Orange-legged monkey tree frog).